We begin with the raw amino-acid sequence, 344 residues long: Holliday junction branch migration complex subunit RuvB (344 aa).

A large ATPase domain (RuvB-L) region spans residues 1–181 (MERIVTPAEM…FGVLCAMEYY (181 aa)). Residues Leu20, Arg21, Gly62, Lys65, Thr66, Thr67, 128-130 (EDY), Arg171, Tyr181, and Arg218 contribute to the ATP site. Thr66 provides a ligand contact to Mg(2+). A small ATPAse domain (RuvB-S) region spans residues 182 to 252 (DETQLKEIVI…EARDALELLE (71 aa)). The head domain (RuvB-H) stretch occupies residues 255–344 (NQGFDKVDNK…SNKGQTSFFK (90 aa)). Residues Arg310 and Arg315 each coordinate DNA.

Belongs to the RuvB family. Homohexamer. Forms an RuvA(8)-RuvB(12)-Holliday junction (HJ) complex. HJ DNA is sandwiched between 2 RuvA tetramers; dsDNA enters through RuvA and exits via RuvB. An RuvB hexamer assembles on each DNA strand where it exits the tetramer. Each RuvB hexamer is contacted by two RuvA subunits (via domain III) on 2 adjacent RuvB subunits; this complex drives branch migration. In the full resolvosome a probable DNA-RuvA(4)-RuvB(12)-RuvC(2) complex forms which resolves the HJ.

The protein localises to the cytoplasm. The catalysed reaction is ATP + H2O = ADP + phosphate + H(+). Its function is as follows. The RuvA-RuvB-RuvC complex processes Holliday junction (HJ) DNA during genetic recombination and DNA repair, while the RuvA-RuvB complex plays an important role in the rescue of blocked DNA replication forks via replication fork reversal (RFR). RuvA specifically binds to HJ cruciform DNA, conferring on it an open structure. The RuvB hexamer acts as an ATP-dependent pump, pulling dsDNA into and through the RuvAB complex. RuvB forms 2 homohexamers on either side of HJ DNA bound by 1 or 2 RuvA tetramers; 4 subunits per hexamer contact DNA at a time. Coordinated motions by a converter formed by DNA-disengaged RuvB subunits stimulates ATP hydrolysis and nucleotide exchange. Immobilization of the converter enables RuvB to convert the ATP-contained energy into a lever motion, pulling 2 nucleotides of DNA out of the RuvA tetramer per ATP hydrolyzed, thus driving DNA branch migration. The RuvB motors rotate together with the DNA substrate, which together with the progressing nucleotide cycle form the mechanistic basis for DNA recombination by continuous HJ branch migration. Branch migration allows RuvC to scan DNA until it finds its consensus sequence, where it cleaves and resolves cruciform DNA. This chain is Holliday junction branch migration complex subunit RuvB, found in Clostridium botulinum (strain Eklund 17B / Type B).